A 138-amino-acid chain; its full sequence is Sec-independent protein translocase protein TatB (138 aa).

The chain crosses the membrane as a helical span at residues 2 to 18 (SFGEIIVILVVAILVLG). The disordered stretch occupies residues 109-138 (NNLSGQNLNTEEKPNLSKLETQDKNGKINV). Residues 118–138 (TEEKPNLSKLETQDKNGKINV) show a composition bias toward basic and acidic residues.

Belongs to the TatB family. As to quaternary structure, the Tat system comprises two distinct complexes: a TatABC complex, containing multiple copies of TatA, TatB and TatC subunits, and a separate TatA complex, containing only TatA subunits. Substrates initially bind to the TatABC complex, which probably triggers association of the separate TatA complex to form the active translocon.

Its subcellular location is the cell inner membrane. Functionally, part of the twin-arginine translocation (Tat) system that transports large folded proteins containing a characteristic twin-arginine motif in their signal peptide across membranes. Together with TatC, TatB is part of a receptor directly interacting with Tat signal peptides. TatB may form an oligomeric binding site that transiently accommodates folded Tat precursor proteins before their translocation. In Campylobacter jejuni subsp. jejuni serotype O:2 (strain ATCC 700819 / NCTC 11168), this protein is Sec-independent protein translocase protein TatB.